The chain runs to 281 residues: Biotin synthase (281 aa).

The region spanning 1-230 (MNQKIFLCSI…AQRIMVAGGR (230 aa)) is the Radical SAM core domain. 3 residues coordinate [4Fe-4S] cluster: C18, C22, and C25. Residues C62, C97, and R223 each coordinate [2Fe-2S] cluster.

Belongs to the radical SAM superfamily. Biotin synthase family. In terms of assembly, homodimer. [4Fe-4S] cluster serves as cofactor. It depends on [2Fe-2S] cluster as a cofactor.

The enzyme catalyses (4R,5S)-dethiobiotin + (sulfur carrier)-SH + 2 reduced [2Fe-2S]-[ferredoxin] + 2 S-adenosyl-L-methionine = (sulfur carrier)-H + biotin + 2 5'-deoxyadenosine + 2 L-methionine + 2 oxidized [2Fe-2S]-[ferredoxin]. The protein operates within cofactor biosynthesis; biotin biosynthesis; biotin from 7,8-diaminononanoate: step 2/2. Its function is as follows. Catalyzes the conversion of dethiobiotin (DTB) to biotin by the insertion of a sulfur atom into dethiobiotin via a radical-based mechanism. This Sulfurimonas denitrificans (strain ATCC 33889 / DSM 1251) (Thiomicrospira denitrificans (strain ATCC 33889 / DSM 1251)) protein is Biotin synthase.